The following is a 363-amino-acid chain: Trichothecene biosynthesis protein 14 (363 aa).

The protein belongs to the TRI14 family.

Functionally, part of the gene cluster that mediates the production of the antimicrobial trichothecene harzianum A (HA) that plays a role in Botrytis cinerea antagonistic activity and plant defense priming. The biosynthesis of harzianum A begins with the cyclization of farnesyl diphosphate to trichodiene and is catalyzed by the trichodiene synthase TRI5. Trichodiene undergoes a series of oxygenations catalyzed by the cytochrome P450 monooxygenase TRI4. TRI4 controls the addition of 3 oxygens at C-2, C-11, and the C-12, C-13-epoxide to form the intermediate isotrichodiol. Isotrichodiol then undergoes a non-enzymatic isomerization and cyclization to form 12,13-epoxytrichothec-9-ene (EPT) which is further converted to trichodermol by the cytochrome P450 monooxygenase TRI11 via C-4 hydroxylation. The last step of HA synthesis is esterification of an octatriendioyl moiety to the C-4 oxygen of trichodermol. The octatriendioyl moiety is probably produced by the polyketide synthase TRI17 and the esterification performed by the trichothecene O-acetyltransferase TRI3. The protein is Trichothecene biosynthesis protein 14 of Trichoderma arundinaceum.